Here is a 338-residue protein sequence, read N- to C-terminus: Thiosulfate-binding protein (338 aa).

Residues 1 to 25 form the signal peptide; it reads MAVNLLKKNSLALVASLLLAGHVQA.

Belongs to the prokaryotic sulfate-binding protein family. The complex is composed of two ATP-binding proteins (CysA), two transmembrane proteins (CysT and CysW) and a solute-binding protein (CysP).

Its subcellular location is the periplasm. Functionally, part of the ABC transporter complex CysAWTP (TC 3.A.1.6.1) involved in sulfate/thiosulfate import. This protein specifically binds thiosulfate and is involved in its transmembrane transport. The chain is Thiosulfate-binding protein (cysP) from Escherichia coli (strain K12).